Reading from the N-terminus, the 105-residue chain is Transcriptional regulator SutA (105 aa).

A compositionally biased stretch (acidic residues) spans 1–37 (MSEEELEQDELDGADEDDGEELAAADDGEADSSDGDE). A disordered region spans residues 1-105 (MSEEELEQDE…PDSKYGSRPI (105 aa)). Basic and acidic residues-rich tracts occupy residues 59 to 83 (AKQK…KVQE) and 92 to 105 (PPKK…SRPI).

As to quaternary structure, interacts with RNA polymerase.

Its function is as follows. Causes widespread changes in gene expression, and plays a direct role in the regulation of genes encoding ribosomal components. Associates with chromosomal DNA through interaction with RNA polymerase. Contributes to biofilm formation and secondary metabolite production. Important during transitions to and from the survival state. This Pseudomonas aeruginosa (strain UCBPP-PA14) protein is Transcriptional regulator SutA.